The primary structure comprises 782 residues: E3 UFM1-protein ligase 1 homolog (782 aa).

The tract at residues 404–478 (NVSTQELEDE…SRGGGGASKK (75 aa)) is disordered.

Belongs to the UFL1 family.

In terms of biological role, E3 UFM1-protein ligase that mediates ufmylation of target proteins. This chain is E3 UFM1-protein ligase 1 homolog, found in Drosophila melanogaster (Fruit fly).